The sequence spans 376 residues: Crh-like protein 4 (376 aa).

The first 21 residues, 1–21 (MFPKIFLTAATALLSAKSTFA), serve as a signal peptide directing secretion. Residues 22–229 (QTYSSCNPLF…WARGPTDYSN (208 aa)) form the GH16 domain. Cys-27 and Cys-35 are disulfide-bonded. Glu-119 serves as the catalytic Nucleophile. Glu-123 (proton donor) is an active-site residue. 4 residues coordinate chitin: Glu-123, Lys-202, Trp-206, and Thr-217. Ser-346 carries GPI-anchor amidated serine lipidation. Residues 347–376 (ASPINISRINPLLLCGPFTFFFFAAIRRWP) constitute a propeptide, removed in mature form. The N-linked (GlcNAc...) asparagine glycan is linked to Asn-351.

This sequence belongs to the glycosyl hydrolase 16 family. CRH1 subfamily.

The protein localises to the cell membrane. The catalysed reaction is Random endo-hydrolysis of N-acetyl-beta-D-glucosaminide (1-&gt;4)-beta-linkages in chitin and chitodextrins.. In terms of biological role, dual chitinase/transglycosylase that plays a role in cell wall architecture. Chitinase and transglycosylase activities are coupled. Required for the polysaccharide cross-linking at the septa and the cell wall. More specifically, transfers chitin to 1,6-beta-glucan in the cell wall. This Botryotinia fuckeliana (strain B05.10) (Noble rot fungus) protein is Crh-like protein 4.